The primary structure comprises 119 residues: UPF0342 protein GK0640 (119 aa).

This sequence belongs to the UPF0342 family.

This Geobacillus kaustophilus (strain HTA426) protein is UPF0342 protein GK0640.